Reading from the N-terminus, the 453-residue chain is tRNA-2-methylthio-N(6)-dimethylallyladenosine synthase (453 aa).

The region spanning 7–123 (GTYWITTFGC…LDTLLSQVEA (117 aa)) is the MTTase N-terminal domain. 6 residues coordinate [4Fe-4S] cluster: cysteine 16, cysteine 52, cysteine 86, cysteine 158, cysteine 162, and cysteine 165. Residues 144-381 (RDSSLCAWVN…NALVERKAKA (238 aa)) form the Radical SAM core domain. Positions 384-447 (QRYLGRVEEV…AFSLSGSAQA (64 aa)) constitute a TRAM domain.

It belongs to the methylthiotransferase family. MiaB subfamily. Monomer. [4Fe-4S] cluster serves as cofactor.

The protein localises to the cytoplasm. The catalysed reaction is N(6)-dimethylallyladenosine(37) in tRNA + (sulfur carrier)-SH + AH2 + 2 S-adenosyl-L-methionine = 2-methylsulfanyl-N(6)-dimethylallyladenosine(37) in tRNA + (sulfur carrier)-H + 5'-deoxyadenosine + L-methionine + A + S-adenosyl-L-homocysteine + 2 H(+). Functionally, catalyzes the methylthiolation of N6-(dimethylallyl)adenosine (i(6)A), leading to the formation of 2-methylthio-N6-(dimethylallyl)adenosine (ms(2)i(6)A) at position 37 in tRNAs that read codons beginning with uridine. The chain is tRNA-2-methylthio-N(6)-dimethylallyladenosine synthase from Synechococcus sp. (strain RCC307).